We begin with the raw amino-acid sequence, 361 residues long: Phosphoserine aminotransferase (361 aa).

An L-glutamate-binding site is contributed by R42. Pyridoxal 5'-phosphate is bound by residues 76 to 77 (AT), W102, T152, D172, and Q195. K196 is subject to N6-(pyridoxal phosphate)lysine. Residue 237–238 (NT) participates in pyridoxal 5'-phosphate binding.

The protein belongs to the class-V pyridoxal-phosphate-dependent aminotransferase family. SerC subfamily. In terms of assembly, homodimer. Requires pyridoxal 5'-phosphate as cofactor.

It localises to the cytoplasm. It catalyses the reaction O-phospho-L-serine + 2-oxoglutarate = 3-phosphooxypyruvate + L-glutamate. The enzyme catalyses 4-(phosphooxy)-L-threonine + 2-oxoglutarate = (R)-3-hydroxy-2-oxo-4-phosphooxybutanoate + L-glutamate. It functions in the pathway amino-acid biosynthesis; L-serine biosynthesis; L-serine from 3-phospho-D-glycerate: step 2/3. The protein operates within cofactor biosynthesis; pyridoxine 5'-phosphate biosynthesis; pyridoxine 5'-phosphate from D-erythrose 4-phosphate: step 3/5. Catalyzes the reversible conversion of 3-phosphohydroxypyruvate to phosphoserine and of 3-hydroxy-2-oxo-4-phosphonooxybutanoate to phosphohydroxythreonine. This is Phosphoserine aminotransferase from Xanthomonas euvesicatoria pv. vesicatoria (strain 85-10) (Xanthomonas campestris pv. vesicatoria).